Consider the following 207-residue polypeptide: FMN-dependent NADH:quinone oxidoreductase 1 (207 aa).

FMN is bound by residues Ser-9, 15–17 (SIS), and 139–142 (TRGG).

It belongs to the azoreductase type 1 family. As to quaternary structure, homodimer. It depends on FMN as a cofactor.

It carries out the reaction 2 a quinone + NADH + H(+) = 2 a 1,4-benzosemiquinone + NAD(+). It catalyses the reaction N,N-dimethyl-1,4-phenylenediamine + anthranilate + 2 NAD(+) = 2-(4-dimethylaminophenyl)diazenylbenzoate + 2 NADH + 2 H(+). Functionally, quinone reductase that provides resistance to thiol-specific stress caused by electrophilic quinones. In terms of biological role, also exhibits azoreductase activity. Catalyzes the reductive cleavage of the azo bond in aromatic azo compounds to the corresponding amines. The protein is FMN-dependent NADH:quinone oxidoreductase 1 of Trichormus variabilis (strain ATCC 29413 / PCC 7937) (Anabaena variabilis).